The sequence spans 397 residues: Probable transport protein MmpL6 (397 aa).

Transmembrane regions (helical) follow at residues 190–210 (YDLLIAGIAALSLILLIMMII), 214–234 (LVAALVIVGTVALSLGASFGL), 242–262 (LLGIQLYWIVLALAVILLLAV), 293–313 (TGGVVTAAGLVFAATMSSFVF), and 328–348 (LGLLFDTLVVRAFMTPSIAVL).

Belongs to the resistance-nodulation-cell division (RND) (TC 2.A.6) family. MmpL subfamily.

It is found in the cell membrane. This chain is Probable transport protein MmpL6 (mmpL6), found in Mycobacterium tuberculosis (strain CDC 1551 / Oshkosh).